A 591-amino-acid polypeptide reads, in one-letter code: MCMDRLVESYPTGDPGDACRILGPIAIMQADLEEISEFGLQTSIFGRPTPISRLHHTVSSLHHFESGHWVSTYKSRPAAFFFTSGDFHSDQFNKAIAGRRDFVRSCRRGHAERNYSGFSLADGTIIWTLKYVPLAASRCLIFLRVIRMQKFSDQVKEMPRRERRVLETLLYALPFLLAQNLVPAILILKTKKNAVLRYLWIFWSVFVFYQWLQIPISHGESGTYVAKVGVQLFIVILQGFNLVLINPLDRDELLQTKVTGPRDDLLRQVYKVARLFTYLRGVRTPWQVKGIPSHPAYLELQPKTPISRSAFLVRQAAIVAWLYLYLNCANSLADRNSSPLSKPIYGLGYLRVSREEWRTRIMTSLMFWFAFLRAAVDIDYRTASILSVGVGLDAPEDWPPLFGRANQAYTLRNFWGTYWHQMFRWPFTATSNYLARELMALPRPSLLERYTNIFFVFLVSGVMHVMSDLLMGISMSQSASILFFCSMAVGVMIEDAVQAAWTRVSDSHRPGGASTVDSDGYAVPCWHKLVGFIWVCVWLSLTTPAWLCPLQMSKEKSLFLVNIPELVGTRKAIAITVGGGLLVKYTFRGEL.

Asparagine 114 is a glycosylation site (N-linked (GlcNAc...) asparagine). A run of 9 helical transmembrane segments spans residues 123-143 (GTIIWTLKYVPLAASRCLIFL), 168-188 (TLLYALPFLLAQNLVPAILIL), 199-219 (LWIFWSVFVFYQWLQIPISHG), 228-248 (VGVQLFIVILQGFNLVLINPL), 309-329 (SAFLVRQAAIVAWLYLYLNCA), 383-403 (ASILSVGVGLDAPEDWPPLFG), 453-473 (IFFVFLVSGVMHVMSDLLMGI), 481-501 (ILFFCSMAVGVMIEDAVQAAW), and 529-549 (LVGFIWVCVWLSLTTPAWLCP).

It belongs to the wax synthase family.

The protein localises to the membrane. The enzyme catalyses sartorypyrone F + acetyl-CoA = sartorypyrone G + CoA. It carries out the reaction sartorypyrone D + acetyl-CoA = sartorypyrone A + CoA. It participates in secondary metabolite biosynthesis; terpenoid biosynthesis. Acetyltransferase; part of the gene cluster that mediates the biosynthesis of meroterpenoids called sartorypyrones. SpyB catalyzes the last step of the pathway and is responsible for the acetylation of sartorypyrones D and F to produce sartorypyrones A and G, respectively. The biosynthesis of sartorypyrones begins with the production of triacetic acid lactone (TAL) by the NR-PKS spyA using one molecule of acetyl-CoA and two molecules of malonyl-CoA. The prenyltransferase spyF then conjugates geranylgeranyl pyrophosphate (GGPP) to TAL to form geranylgeranyl-triacetate lactone, for which the pathway-specific geranylgeranyl pyrophosphate synthase (GGPS) spyE is required to provide GGPP. Subsequently, geranylgeranyl-triacetate lactone is epoxidized at the terminal olein by the FAD-dependent monooxygenase spyC, followed by cyclization of the terpenoid component catalyzed by the terpene cyclase spyD to produce both the bicyclic sartorypyrone F and the monocyclic sartorypyrone D. Finally, the last step of the biosynthesis involves the acetylation of the meroterpenoids sartorypyrones D and F by the acetyltransferase SpyB to produce sartorypyrones A and G, respectively. The protein is Acetyltransferase spyB of Aspergillus fumigatus (strain ATCC MYA-4609 / CBS 101355 / FGSC A1100 / Af293) (Neosartorya fumigata).